A 660-amino-acid chain; its full sequence is Tripartite terminase subunit 3 (660 aa).

Positions 203 to 210 match the Walker A motif motif; it reads VPRRHGKT. Positions 294-299 match the Walker B motif motif; the sequence is ILLVDE. Glu-299 serves as the catalytic For ATPase activity. Active-site for nuclease activity residues include Asp-452, Glu-523, and Asp-637.

This sequence belongs to the herpesviridae TRM3 protein family. As to quaternary structure, interacts with the terminase subunits TRM1 and TRM2. Interacts with portal protein.

It localises to the host nucleus. In terms of biological role, component of the molecular motor that translocates viral genomic DNA in empty capsid during DNA packaging. Forms a tripartite terminase complex together with TRM1 and TRM2 in the host cytoplasm. Once the complex reaches the host nucleus, it interacts with the capsid portal vertex. This portal forms a ring in which genomic DNA is translocated into the capsid. TRM3 carries an RNase H-like nuclease activity that plays an important role for the cleavage of concatemeric viral DNA into unit length genomes. This Elephas maximus (Indian elephant) protein is Tripartite terminase subunit 3.